Reading from the N-terminus, the 197-residue chain is GTP cyclohydrolase 1 (197 aa).

C85, H88, and C156 together coordinate Zn(2+).

Belongs to the GTP cyclohydrolase I family. As to quaternary structure, toroid-shaped homodecamer, composed of two pentamers of five dimers.

The catalysed reaction is GTP + H2O = 7,8-dihydroneopterin 3'-triphosphate + formate + H(+). It functions in the pathway cofactor biosynthesis; 7,8-dihydroneopterin triphosphate biosynthesis; 7,8-dihydroneopterin triphosphate from GTP: step 1/1. The polypeptide is GTP cyclohydrolase 1 (Mesorhizobium japonicum (strain LMG 29417 / CECT 9101 / MAFF 303099) (Mesorhizobium loti (strain MAFF 303099))).